A 499-amino-acid chain; its full sequence is Bestrophin homolog 22 (499 aa).

4 helical membrane-spanning segments follow: residues 29-49 (WKAV…ISCI), 77-97 (IPLT…WGSI), 235-255 (LVYP…CLIG), and 267-287 (GIDL…MGWM). Over residues 417–432 (HNAKHAKQRGLERANS) the composition is skewed to basic and acidic residues. Disordered stretches follow at residues 417–455 (HNAK…ANGS) and 474–499 (TSNP…TSRH).

This sequence belongs to the anion channel-forming bestrophin (TC 1.A.46) family. Calcium-sensitive chloride channel subfamily. In terms of assembly, forms oligomers.

It is found in the cell membrane. Its function is as follows. Forms chloride channels. The protein is Bestrophin homolog 22 (best-22) of Caenorhabditis elegans.